Consider the following 200-residue polypeptide: Probable UbiX-like flavin prenyltransferase (200 aa).

FMN-binding positions include 9-11 (GAT), serine 36, 87-90 (SMKT), and arginine 122.

This sequence belongs to the UbiX/PAD1 family. YclB subfamily. Homododecamer.

The enzyme catalyses dimethylallyl phosphate + FMNH2 = prenylated FMNH2 + phosphate. Functionally, involved in the non-oxidative decarboxylation and detoxification of phenolic derivatives under both aerobic and anaerobic conditions. Flavin prenyltransferase that catalyzes the synthesis of the prenylated FMN cofactor (prenyl-FMN) for phenolic acid decarboxylase. The polypeptide is Probable UbiX-like flavin prenyltransferase (Streptomyces sp. (strain D7)).